An 882-amino-acid chain; its full sequence is Alanine--tRNA ligase (882 aa).

Zn(2+) is bound by residues histidine 576, histidine 580, cysteine 678, and histidine 682.

It belongs to the class-II aminoacyl-tRNA synthetase family. Requires Zn(2+) as cofactor.

It is found in the cytoplasm. It carries out the reaction tRNA(Ala) + L-alanine + ATP = L-alanyl-tRNA(Ala) + AMP + diphosphate. Functionally, catalyzes the attachment of alanine to tRNA(Ala) in a two-step reaction: alanine is first activated by ATP to form Ala-AMP and then transferred to the acceptor end of tRNA(Ala). Also edits incorrectly charged Ser-tRNA(Ala) and Gly-tRNA(Ala) via its editing domain. The polypeptide is Alanine--tRNA ligase (Anaplasma marginale (strain St. Maries)).